The sequence spans 475 residues: Ataxin-10 (475 aa).

Arg10 is modified (omega-N-methylarginine). Residues Ser12 and Ser77 each carry the phosphoserine modification. Thr82 carries the phosphothreonine modification. Ser430 is subject to Phosphoserine.

The protein belongs to the ataxin-10 family. In terms of assembly, homooligomer. Interacts with GNB2. Interacts with IQCB1. Interacts with OGT. Polyubiquitinated. Post-translationally, phosphorylation at Ser-12 by AURKB promotes the association of ATXN10 with PLK1. Phosphorylation at Ser-77 and Thr-82 by PLK1 may play a role in the regulation of cytokinesis and may stimulate the proteasome-mediated degradation of ATXN10. Ubiquitous distribution. Markedly increased expression in testis, adrenals, and brain.

It is found in the cytoplasm. Its subcellular location is the perinuclear region. It localises to the midbody. The protein localises to the cytoskeleton. The protein resides in the cilium basal body. It is found in the microtubule organizing center. Its subcellular location is the centrosome. It localises to the centriole. Its function is as follows. May play a role in the regulation of cytokinesis. May play a role in signaling by stimulating protein glycosylation. Induces neuritogenesis by activating the Ras-MAP kinase pathway and is necessary for the survival of cerebellar neurons. Does not appear to play a major role in ciliogenesis. In Rattus norvegicus (Rat), this protein is Ataxin-10 (Atxn10).